Here is a 671-residue protein sequence, read N- to C-terminus: UvrABC system protein B (671 aa).

Residues 26–183 (EGLENGLAHQ…RRLSELQYSR (158 aa)) form the Helicase ATP-binding domain. Position 39–46 (39–46 (GVTGSGKT)) interacts with ATP. The short motif at 92 to 115 (YYDYYQPEAYVPSSDTFIEKDASV) is the Beta-hairpin element. Positions 431-593 (QVDDLLSEIR…IIPQGLNKKI (163 aa)) constitute a Helicase C-terminal domain. The region spanning 631-666 (DQKIRELEAKMYTYAQNLEFEQAAELRDQVHQLRQQ) is the UVR domain.

This sequence belongs to the UvrB family. In terms of assembly, forms a heterotetramer with UvrA during the search for lesions. Interacts with UvrC in an incision complex.

The protein localises to the cytoplasm. Its function is as follows. The UvrABC repair system catalyzes the recognition and processing of DNA lesions. A damage recognition complex composed of 2 UvrA and 2 UvrB subunits scans DNA for abnormalities. Upon binding of the UvrA(2)B(2) complex to a putative damaged site, the DNA wraps around one UvrB monomer. DNA wrap is dependent on ATP binding by UvrB and probably causes local melting of the DNA helix, facilitating insertion of UvrB beta-hairpin between the DNA strands. Then UvrB probes one DNA strand for the presence of a lesion. If a lesion is found the UvrA subunits dissociate and the UvrB-DNA preincision complex is formed. This complex is subsequently bound by UvrC and the second UvrB is released. If no lesion is found, the DNA wraps around the other UvrB subunit that will check the other stand for damage. In Yersinia pestis bv. Antiqua (strain Antiqua), this protein is UvrABC system protein B.